A 249-amino-acid chain; its full sequence is MKFILFALLVSAGSWYGWKQLHSQDAVSKPIRYVKIEGAFQYTNKETLKRILTPEMKRGFYHVDMDAIHQLISQLPLVAAVDVNRVWPDAVHIKITEQKPIVRWGDKAVLNKQGEVLIPDDIDEFKNLPLITGPEGQEKKLLEIMKGVYIVLKDKSMQLAEFHVNDRRAWRIKLASGLEMQLGRKAPLENMQRFLKTMDLLGEEQVAMMASVDTRYPNGYAVTWKPDTPEIDWKAIAENYKNVMKERRI.

Residues 1-6 (MKFILF) lie on the Cytoplasmic side of the membrane. The chain crosses the membrane as a helical span at residues 7–23 (ALLVSAGSWYGWKQLHS). Topologically, residues 24–249 (QDAVSKPIRY…YKNVMKERRI (226 aa)) are periplasmic. One can recognise a POTRA domain in the interval 29–98 (KPIRYVKIEG…DAVHIKITEQ (70 aa)).

The protein belongs to the FtsQ/DivIB family. FtsQ subfamily. As to quaternary structure, part of a complex composed of FtsB, FtsL and FtsQ.

It is found in the cell inner membrane. Functionally, essential cell division protein. May link together the upstream cell division proteins, which are predominantly cytoplasmic, with the downstream cell division proteins, which are predominantly periplasmic. May control correct divisome assembly. In Methylomonas methanica (strain DSM 25384 / MC09), this protein is Cell division protein FtsQ.